Consider the following 371-residue polypeptide: Alanine racemase (371 aa).

Lys35 serves as the catalytic Proton acceptor; specific for D-alanine. Residue Lys35 is modified to N6-(pyridoxal phosphate)lysine. Arg130 serves as a coordination point for substrate. The Proton acceptor; specific for L-alanine role is filled by Tyr256. Met304 provides a ligand contact to substrate.

It belongs to the alanine racemase family. Pyridoxal 5'-phosphate is required as a cofactor.

It carries out the reaction L-alanine = D-alanine. The protein operates within amino-acid biosynthesis; D-alanine biosynthesis; D-alanine from L-alanine: step 1/1. Its function is as follows. Catalyzes the interconversion of L-alanine and D-alanine. May also act on other amino acids. This is Alanine racemase (alr) from Verminephrobacter eiseniae (strain EF01-2).